A 452-amino-acid polypeptide reads, in one-letter code: Lamina-associated polypeptide 2, isoforms beta/delta/epsilon/gamma (452 aa).

The interval 1–409 (MPEFLEDPSV…KSEKTKKRRS (409 aa)) is nucleoplasmic. The 44-residue stretch at 5-48 (LEDPSVLTKDKLKSELVANNVTLPAGEQRKDVYVQLYLQHLTAR) folds into the LEM-like domain. Disordered stretches follow at residues 48-111 (RNRP…DLDV) and 149-263 (REQG…RVET). The tract at residues 49–108 (NRPPLAAGANSKGPPDFSSDEEREPTPVLGSGASVGRGRGAVGRKATKKTDKPRLEDKDD) is linker. A phosphoserine mark is found at S59, S66, and S67. Residue T74 is modified to Phosphothreonine. Residues S79 and S82 each carry the phosphoserine modification. Omega-N-methylarginine is present on residues R85 and R87. The segment covering 96-105 (KKTDKPRLED) has biased composition (basic and acidic residues). One can recognise an LEM domain in the interval 109 to 153 (LDVTELSNEELLDQLVRYGVNPGPIVGTTRKLYEKKLLKLREQGT). Positions 137 to 242 (TRKLYEKKLL…TSGSSTGGPL (106 aa)) are NAKAP95-binding N. Phosphothreonine is present on T153. Residues 154-177 (ESRSSTPLPTVSSSAENTRQNGSN) are compositionally biased toward polar residues. A phosphoserine mark is found at S155 and S158. Phosphothreonine occurs at positions 159 and 163. A phosphoserine mark is found at S165, S167, and S176. Over residues 178–202 (DSDRYSDNDEDSKIELKLEKREPLK) the composition is skewed to basic and acidic residues. Residue S179 is modified to Phosphoserine; by PKC. 2 positions are modified to phosphoserine: S183 and S189. Residue K206 is modified to N6-acetyllysine. T210 is modified (phosphothreonine). Residues S221 and S223 each carry the phosphoserine modification. Residues 226 to 240 (GVTETEWTSGSSTGG) show a composition bias toward low complexity. 6 positions are modified to phosphoserine: S249, S253, S264, S291, S305, and S306. Residues 298–370 (TGNFKHASSI…SCRRPIKGAA (73 aa)) are binds lamins B. Residues 299–373 (GNFKHASSIL…RPIKGAAGRP (75 aa)) are NAKAP95-binding C. T311 is modified (phosphothreonine). Position 314 is a phosphoserine (S314). A Citrulline modification is found at R319. Residues S361, S377, and S384 each carry the phosphoserine modification. K388 carries the N6-acetyllysine modification. Residue K400 forms a Glycyl lysine isopeptide (Lys-Gly) (interchain with G-Cter in SUMO2) linkage. Phosphoserine is present on S401. Residues 410–430 (VPMWIKMLLFALVAVFLFLVY) form a helical; Signal-anchor for type II membrane protein membrane-spanning segment. The Lumenal portion of the chain corresponds to 431–452 (QAMETNQGNPFTNFLQDTKISN).

This sequence belongs to the LEM family. In terms of assembly, interacts with LMNB1, LMNB2, BANF1, AKAP8L, GMCL and chromosomes. Mitosis-specific phosphorylation specifically abolishes its binding to lamin B and chromosomes. Post-translationally, citrullinated by PADI4.

It is found in the nucleus inner membrane. Its subcellular location is the chromosome. Functionally, may help direct the assembly of the nuclear lamina and thereby help maintain the structural organization of the nuclear envelope. Possible receptor for attachment of lamin filaments to the inner nuclear membrane. May be involved in the control of initiation of DNA replication through its interaction with NAKAP95. This is Lamina-associated polypeptide 2, isoforms beta/delta/epsilon/gamma (Tmpo) from Mus musculus (Mouse).